A 306-amino-acid chain; its full sequence is D-alanine--D-alanine ligase (306 aa).

An ATP-grasp domain is found at lysine 101–arginine 301. Valine 129 to threonine 185 is an ATP binding site. The Mg(2+) site is built by aspartate 256, glutamate 268, and asparagine 270.

Belongs to the D-alanine--D-alanine ligase family. The cofactor is Mg(2+). Mn(2+) is required as a cofactor.

The protein resides in the cytoplasm. It catalyses the reaction 2 D-alanine + ATP = D-alanyl-D-alanine + ADP + phosphate + H(+). The protein operates within cell wall biogenesis; peptidoglycan biosynthesis. Cell wall formation. The sequence is that of D-alanine--D-alanine ligase from Desulforudis audaxviator (strain MP104C).